The following is a 351-amino-acid chain: Glycerol-3-phosphate dehydrogenase [NAD(P)+] (351 aa).

NADPH is bound by residues S18, W19, R38, and K122. Sn-glycerol 3-phosphate-binding residues include K122, G153, and S155. NADPH is bound at residue A157. 5 residues coordinate sn-glycerol 3-phosphate: K208, D261, S271, R272, and N273. K208 (proton acceptor) is an active-site residue. R272 serves as a coordination point for NADPH. An NADPH-binding site is contributed by E297.

This sequence belongs to the NAD-dependent glycerol-3-phosphate dehydrogenase family.

The protein localises to the cytoplasm. The catalysed reaction is sn-glycerol 3-phosphate + NAD(+) = dihydroxyacetone phosphate + NADH + H(+). It carries out the reaction sn-glycerol 3-phosphate + NADP(+) = dihydroxyacetone phosphate + NADPH + H(+). The protein operates within membrane lipid metabolism; glycerophospholipid metabolism. Catalyzes the reduction of the glycolytic intermediate dihydroxyacetone phosphate (DHAP) to sn-glycerol 3-phosphate (G3P), the key precursor for phospholipid synthesis. This Bordetella parapertussis (strain 12822 / ATCC BAA-587 / NCTC 13253) protein is Glycerol-3-phosphate dehydrogenase [NAD(P)+].